A 426-amino-acid polypeptide reads, in one-letter code: Glutamate-1-semialdehyde 2,1-aminomutase (426 aa).

Lys265 bears the N6-(pyridoxal phosphate)lysine mark.

The protein belongs to the class-III pyridoxal-phosphate-dependent aminotransferase family. HemL subfamily. In terms of assembly, homodimer. The cofactor is pyridoxal 5'-phosphate.

The protein localises to the cytoplasm. The enzyme catalyses (S)-4-amino-5-oxopentanoate = 5-aminolevulinate. It functions in the pathway porphyrin-containing compound metabolism; protoporphyrin-IX biosynthesis; 5-aminolevulinate from L-glutamyl-tRNA(Glu): step 2/2. The polypeptide is Glutamate-1-semialdehyde 2,1-aminomutase (Escherichia coli O139:H28 (strain E24377A / ETEC)).